The sequence spans 432 residues: Probable exopolygalacturonase X (432 aa).

A signal peptide spans M1 to G23. N113, N129, and N199 each carry an N-linked (GlcNAc...) asparagine glycan. The PbH1 1 repeat unit spans residues S231–P252. D245 acts as the Proton donor in catalysis. Cysteines 247 and 264 form a disulfide. N-linked (GlcNAc...) asparagine glycosylation is found at N253 and N265. PbH1 repeat units lie at residues S254–S274, V285–V306, and V327–Q348. The active site involves H268. N-linked (GlcNAc...) asparagine glycans are attached at residues N292, N297, N329, N354, and N364. A PbH1 5 repeat occupies P362–S394. C392 and C398 are disulfide-bonded.

The protein belongs to the glycosyl hydrolase 28 family.

The protein localises to the secreted. The enzyme catalyses [(1-&gt;4)-alpha-D-galacturonosyl](n) + H2O = alpha-D-galacturonate + [(1-&gt;4)-alpha-D-galacturonosyl](n-1). Its function is as follows. Specific in hydrolyzing the terminal glycosidic bond of polygalacturonic acid and oligogalacturonates. This is Probable exopolygalacturonase X (pgaX) from Aspergillus fumigatus (strain CBS 144.89 / FGSC A1163 / CEA10) (Neosartorya fumigata).